Reading from the N-terminus, the 222-residue chain is Riboflavin kinase (222 aa).

The tract at residues 1–92 (MVLAEDLECL…CRLFAHEGGH (92 aa)) is H-T-H motif-like. Residues 93–222 (YTLPGIVISG…DRVNVEVAYD (130 aa)) are riboflavin kinase. 102-107 (GLGEGR) provides a ligand contact to CDP. Positions 131 and 133 each coordinate Mg(2+). FMN is bound by residues S188 and E196. Residue 201–204 (VGLR) participates in CDP binding.

Belongs to the archaeal riboflavin kinase family. It depends on Mg(2+) as a cofactor.

The catalysed reaction is riboflavin + CTP = CDP + FMN + H(+). The protein operates within cofactor biosynthesis; FMN biosynthesis; FMN from riboflavin (CTP route): step 1/1. In terms of biological role, catalyzes the CTP-dependent phosphorylation of riboflavin (vitamin B2) to form flavin mononucleotide (FMN). This chain is Riboflavin kinase (ribK), found in Methanoregula boonei (strain DSM 21154 / JCM 14090 / 6A8).